The following is a 76-amino-acid chain: Acyl carrier protein (76 aa).

Positions 1–76 (MSIEERVKKI…SAIDYVQNNQ (76 aa)) constitute a Carrier domain. S36 carries the O-(pantetheine 4'-phosphoryl)serine modification.

It belongs to the acyl carrier protein (ACP) family. 4'-phosphopantetheine is transferred from CoA to a specific serine of apo-ACP by AcpS. This modification is essential for activity because fatty acids are bound in thioester linkage to the sulfhydryl of the prosthetic group.

It localises to the cytoplasm. The protein operates within lipid metabolism; fatty acid biosynthesis. Carrier of the growing fatty acid chain in fatty acid biosynthesis. This chain is Acyl carrier protein, found in Actinobacillus succinogenes (strain ATCC 55618 / DSM 22257 / CCUG 43843 / 130Z).